The following is a 396-amino-acid chain: Probable peptidoglycan glycosyltransferase FtsW (396 aa).

The next 9 helical transmembrane spans lie at 17–37 (FCDGWLLVATLSLMLIGWVMV), 61–81 (VFVLCSMVVALLVLRIPMAWW), 83–103 (ANGPLLLLVGLALLALVLVAG), 117–137 (GIPLNLQASEIAKLCLIVYLA), 159–179 (MVMAVMGVLLIFEPDYGAVVV), 198–218 (FLLLMGLVAALGAALAIAEPY), 274–294 (FVFAVLAEELGMIGAVAVIGL), 316–336 (FAAYLCYGIALVIGAQAFINI), and 350–370 (LPLLSYGGSSLVISAVMVGML).

The protein belongs to the SEDS family. FtsW subfamily.

It is found in the cell inner membrane. The catalysed reaction is [GlcNAc-(1-&gt;4)-Mur2Ac(oyl-L-Ala-gamma-D-Glu-L-Lys-D-Ala-D-Ala)](n)-di-trans,octa-cis-undecaprenyl diphosphate + beta-D-GlcNAc-(1-&gt;4)-Mur2Ac(oyl-L-Ala-gamma-D-Glu-L-Lys-D-Ala-D-Ala)-di-trans,octa-cis-undecaprenyl diphosphate = [GlcNAc-(1-&gt;4)-Mur2Ac(oyl-L-Ala-gamma-D-Glu-L-Lys-D-Ala-D-Ala)](n+1)-di-trans,octa-cis-undecaprenyl diphosphate + di-trans,octa-cis-undecaprenyl diphosphate + H(+). The protein operates within cell wall biogenesis; peptidoglycan biosynthesis. Functionally, peptidoglycan polymerase that is essential for cell division. The polypeptide is Probable peptidoglycan glycosyltransferase FtsW (Halomonas elongata (strain ATCC 33173 / DSM 2581 / NBRC 15536 / NCIMB 2198 / 1H9)).